A 217-amino-acid polypeptide reads, in one-letter code: Large ribosomal subunit protein uL1A (217 aa).

The residue at position 2 (Ser-2) is an N-acetylserine. An N6-methyllysine; by RKM5 modification is found at Lys-47. A phosphoserine mark is found at Ser-79 and Ser-86.

Belongs to the universal ribosomal protein uL1 family. As to quaternary structure, component of the large ribosomal subunit (LSU). Mature yeast ribosomes consist of a small (40S) and a large (60S) subunit. The 40S small subunit contains 1 molecule of ribosomal RNA (18S rRNA) and 33 different proteins (encoded by 57 genes). The large 60S subunit contains 3 rRNA molecules (25S, 5.8S and 5S rRNA) and 46 different proteins (encoded by 81 genes). uL1 forms part of the L1 stalk. In terms of processing, N-terminally acetylated by acetyltransferase NatA.

It is found in the cytoplasm. In terms of biological role, component of the ribosome, a large ribonucleoprotein complex responsible for the synthesis of proteins in the cell. The small ribosomal subunit (SSU) binds messenger RNAs (mRNAs) and translates the encoded message by selecting cognate aminoacyl-transfer RNA (tRNA) molecules. The large subunit (LSU) contains the ribosomal catalytic site termed the peptidyl transferase center (PTC), which catalyzes the formation of peptide bonds, thereby polymerizing the amino acids delivered by tRNAs into a polypeptide chain. The nascent polypeptides leave the ribosome through a tunnel in the LSU and interact with protein factors that function in enzymatic processing, targeting, and the membrane insertion of nascent chains at the exit of the ribosomal tunnel. uL1 forms part of the L1 stalk, a mobile element that plays a role in evacuating the exit-site tRNA. In Saccharomyces cerevisiae (strain ATCC 204508 / S288c) (Baker's yeast), this protein is Large ribosomal subunit protein uL1A.